The chain runs to 391 residues: Protein Wnt-2b (391 aa).

5 disulfide bridges follow: Cys-107-Cys-118, Cys-158-Cys-166, Cys-168-Cys-188, Cys-237-Cys-251, and Cys-239-Cys-246. The N-linked (GlcNAc...) asparagine glycan is linked to Asn-117. A lipid anchor (O-palmitoleoyl serine; by PORCN) is attached at Ser-243. The N-linked (GlcNAc...) asparagine glycan is linked to Asn-283. Cystine bridges form between Cys-309–Cys-340, Cys-325–Cys-335, Cys-339–Cys-379, Cys-355–Cys-370, Cys-357–Cys-367, and Cys-362–Cys-363.

This sequence belongs to the Wnt family. In terms of assembly, forms a soluble 1:1 complex with AFM; this prevents oligomerization and is required for prolonged biological activity. The complex with AFM may represent the physiological form in body fluids. Interacts with FZD4 and FZD5. In terms of processing, palmitoleoylation is required for efficient binding to frizzled receptors. Depalmitoleoylation leads to Wnt signaling pathway inhibition. In terms of tissue distribution, isoform 1 is expressed in adult heart, brain, placenta, lung, prostate, testis, ovary, small intestine and colon. In the adult brain, it is mainly found in the caudate nucleus, subthalamic nucleus and thalamus. Also detected in fetal brain, lung and kidney. Isoform 2 is expressed in fetal brain, fetal lung, fetal kidney, caudate nucleus, testis and cancer cell lines.

It localises to the secreted. It is found in the extracellular space. Its subcellular location is the extracellular matrix. Functionally, ligand for members of the frizzled family of seven transmembrane receptors. Functions in the canonical Wnt/beta-catenin signaling pathway. Plays a redundant role in embryonic lung development. In Homo sapiens (Human), this protein is Protein Wnt-2b (WNT2B).